A 160-amino-acid polypeptide reads, in one-letter code: Protein-export protein SecB (160 aa).

The protein belongs to the SecB family. In terms of assembly, homotetramer, a dimer of dimers. One homotetramer interacts with 1 SecA dimer.

The protein localises to the cytoplasm. One of the proteins required for the normal export of preproteins out of the cell cytoplasm. It is a molecular chaperone that binds to a subset of precursor proteins, maintaining them in a translocation-competent state. It also specifically binds to its receptor SecA. This is Protein-export protein SecB from Burkholderia multivorans (strain ATCC 17616 / 249).